The chain runs to 156 residues: uncharacterized protein (156 aa).

Disordered stretches follow at residues 22–64 and 81–156; these read KERV…VLKK and AARA…DENE. Positions 43–56 are enriched in acidic residues; the sequence is PEEDGDHSDKEDEQ. S50 is modified (phosphoserine). An N6-acetyllysine modification is found at K108. A compositionally biased stretch (basic and acidic residues) spans 121–134; sequence TKEEDEINKQDSVK. The residue at position 148 (S148) is a Phosphoserine.

This is an uncharacterized protein from Bos taurus (Bovine).